Reading from the N-terminus, the 629-residue chain is Smc-like protein Sph1 (629 aa).

2 coiled-coil regions span residues 139 to 282 (LETE…LLDD) and 318 to 487 (AETT…NQFD).

Belongs to the Sph1/Sph2 family.

The protein resides in the cytoplasm. In terms of biological role, may play a role in a late step of replication. The sequence is that of Smc-like protein Sph1 (sph1) from Halobacterium salinarum (strain ATCC 29341 / DSM 671 / R1).